The following is an 84-amino-acid chain: Exodeoxyribonuclease 7 small subunit (84 aa).

It belongs to the XseB family. As to quaternary structure, heterooligomer composed of large and small subunits.

The protein resides in the cytoplasm. It catalyses the reaction Exonucleolytic cleavage in either 5'- to 3'- or 3'- to 5'-direction to yield nucleoside 5'-phosphates.. In terms of biological role, bidirectionally degrades single-stranded DNA into large acid-insoluble oligonucleotides, which are then degraded further into small acid-soluble oligonucleotides. This chain is Exodeoxyribonuclease 7 small subunit, found in Yersinia enterocolitica serotype O:8 / biotype 1B (strain NCTC 13174 / 8081).